A 277-amino-acid polypeptide reads, in one-letter code: Ubiquitin-conjugating enzyme suppressor 1 (277 aa).

Positions 254–277 (RTLACPDETNDNRGSEHYTKRKKI) are disordered.

Functionally, not known; its elevated expression suppresses the conditional cell cycle defects associated with UBC3/CDC34 mutations. This Saccharomyces cerevisiae (strain ATCC 204508 / S288c) (Baker's yeast) protein is Ubiquitin-conjugating enzyme suppressor 1 (UBS1).